A 444-amino-acid polypeptide reads, in one-letter code: Transcription activator AKTR-3 (444 aa).

The zn(2)-C6 fungal-type DNA-binding region spans 16-43 (CDFCTQSKLRCNKNKPSCRRCTIQQQPC). Residues 49–89 (RRTGRPPKHPRTANDCQEANGQHGEQDPVTSTPGGSCQQQS) form a disordered region. Basic residues predominate over residues 50–59 (RTGRPPKHPR). Positions 76–89 (PVTSTPGGSCQQQS) are enriched in polar residues.

The protein resides in the nucleus. Its function is as follows. Transcription factor that regulates the expression of the gene clusters that mediate the biosynthesis of the host-selective toxins (HSTs) AK-toxins responsible for Japanese pear black spot disease by the Japanese pear pathotype. AK-toxins are esters of 9,10-epoxy 8-hydroxy 9-methyldecatrienoic acid (EDA). On cellular level, AK-toxins affect plasma membrane of susceptible cells and cause a sudden increase in loss of K(+) after a few minutes of toxin treatment. The chain is Transcription activator AKTR-3 from Alternaria alternata (Alternaria rot fungus).